Reading from the N-terminus, the 375-residue chain is Chaperone protein DnaJ (375 aa).

A J domain is found at 5–70 (DFYETLGVAK…QKRAAYDRYG (66 aa)). The CR-type zinc finger occupies 136–214 (GKTAQIRVPT…CHGQGRVTEE (79 aa)). Cys149, Cys152, Cys166, Cys169, Cys188, Cys191, Cys202, and Cys205 together coordinate Zn(2+). 4 CXXCXGXG motif repeats span residues 149 to 156 (CDVCSGSG), 166 to 173 (CGTCQGTG), 188 to 195 (CPTCHGRG), and 202 to 209 (CPKCHGQG).

The protein belongs to the DnaJ family. As to quaternary structure, homodimer. Zn(2+) serves as cofactor.

Its subcellular location is the cytoplasm. Participates actively in the response to hyperosmotic and heat shock by preventing the aggregation of stress-denatured proteins and by disaggregating proteins, also in an autonomous, DnaK-independent fashion. Unfolded proteins bind initially to DnaJ; upon interaction with the DnaJ-bound protein, DnaK hydrolyzes its bound ATP, resulting in the formation of a stable complex. GrpE releases ADP from DnaK; ATP binding to DnaK triggers the release of the substrate protein, thus completing the reaction cycle. Several rounds of ATP-dependent interactions between DnaJ, DnaK and GrpE are required for fully efficient folding. Also involved, together with DnaK and GrpE, in the DNA replication of plasmids through activation of initiation proteins. The chain is Chaperone protein DnaJ from Rhizobium johnstonii (strain DSM 114642 / LMG 32736 / 3841) (Rhizobium leguminosarum bv. viciae).